The chain runs to 1171 residues: DNA-directed RNA polymerase subunit beta (1171 aa).

Belongs to the RNA polymerase beta chain family. In terms of assembly, the RNAP catalytic core consists of 2 alpha, 1 beta, 1 beta' and 1 omega subunit. When a sigma factor is associated with the core the holoenzyme is formed, which can initiate transcription.

It carries out the reaction RNA(n) + a ribonucleoside 5'-triphosphate = RNA(n+1) + diphosphate. Its function is as follows. DNA-dependent RNA polymerase catalyzes the transcription of DNA into RNA using the four ribonucleoside triphosphates as substrates. This Kineococcus radiotolerans (strain ATCC BAA-149 / DSM 14245 / SRS30216) protein is DNA-directed RNA polymerase subunit beta.